The chain runs to 172 residues: Small ribosomal subunit protein uS5 (172 aa).

Residues 16 to 79 (LKDRLVAINR…EAAKKNLIRV (64 aa)) enclose the S5 DRBM domain.

Belongs to the universal ribosomal protein uS5 family. Part of the 30S ribosomal subunit. Contacts proteins S4 and S8.

Functionally, with S4 and S12 plays an important role in translational accuracy. Its function is as follows. Located at the back of the 30S subunit body where it stabilizes the conformation of the head with respect to the body. The polypeptide is Small ribosomal subunit protein uS5 (Porphyromonas gingivalis (strain ATCC BAA-308 / W83)).